A 219-amino-acid chain; its full sequence is Oxaloacetate tautomerase YcgM (219 aa).

Mg(2+) is bound by residues Glu70, Glu72, and Asp101.

This sequence belongs to the FAH family. A divalent metal cation serves as cofactor.

It carries out the reaction oxaloacetate = enol-oxaloacetate. Tautomerase that converts enol-oxaloacetate to the keto form of oxaloacetate. The polypeptide is Oxaloacetate tautomerase YcgM (Escherichia coli (strain K12)).